A 582-amino-acid polypeptide reads, in one-letter code: Semenogelin-2 (582 aa).

Positions 1–23 are cleaved as a signal peptide; that stretch reads MKSIILFVLSLLLILEKQAAVMG. Disordered stretches follow at residues 26–65, 132–159, 272–295, 318–358, 379–417, and 439–582; these read CGSK…SFSI, GGQA…SSQY, NLNQ…RTEE, TEEK…ERHL, EEQI…EERR, and EEQI…PVST. Composition is skewed to polar residues over residues 31–40 and 137–159; these read QLPSGSSQFP and RGTQ…SSQY. Positions 325-335 are enriched in polar residues; that stretch reads KSQNQVTIHSQ. The segment covering 336–345 has biased composition (basic and acidic residues); sequence GQEHGHKENK. 4 stretches are compositionally biased toward polar residues: residues 379 to 397, 439 to 457, 487 to 496, and 506 to 524; these read EEQI…SQAQ, KDVSQSSTSF, and SQIQ…QNAK. Basic and acidic residues-rich tracts occupy residues 525–552 and 559–582; these read GKSD…ESSE and TEHE…PVST.

This sequence belongs to the semenogelin family. As to quaternary structure, interacts with SERPINA5.

It is found in the secreted. Participates in the formation of a gel matrix (sperm coagulum) entrapping the accessory gland secretions and ejaculated spermatozoa. This chain is Semenogelin-2 (SEMG2), found in Hylobates lar (Lar gibbon).